The chain runs to 199 residues: NAD(P)H dehydrogenase (quinone) (199 aa).

One can recognise a Flavodoxin-like domain in the interval 4 to 190 (VLVLYYSAYG…AGARYQGKTI (187 aa)). FMN contacts are provided by residues 10–15 (SAYGHI) and 78–80 (TRF). Residue Y12 coordinates NAD(+). Position 98 (W98) interacts with substrate. FMN is bound by residues 113–119 (STATQHG) and H134.

The protein belongs to the WrbA family. It depends on FMN as a cofactor.

The enzyme catalyses a quinone + NADH + H(+) = a quinol + NAD(+). The catalysed reaction is a quinone + NADPH + H(+) = a quinol + NADP(+). This chain is NAD(P)H dehydrogenase (quinone), found in Rhodopseudomonas palustris (strain HaA2).